We begin with the raw amino-acid sequence, 550 residues long: Chaperonin GroEL 1 (550 aa).

ATP is bound by residues 29–32 (TIGP), 86–90 (DGTTT), Gly413, 477–479 (NAA), and Asp493. Positions 524 to 550 (AVSDGDHGHSHGHGHSHGHSHPQGPGF) are disordered. Over residues 533-543 (SHGHGHSHGHS) the composition is skewed to basic residues.

The protein belongs to the chaperonin (HSP60) family. As to quaternary structure, forms a cylinder of 14 subunits composed of two heptameric rings stacked back-to-back. Interacts with the co-chaperonin GroES.

It is found in the cytoplasm. It carries out the reaction ATP + H2O + a folded polypeptide = ADP + phosphate + an unfolded polypeptide.. Together with its co-chaperonin GroES, plays an essential role in assisting protein folding. The GroEL-GroES system forms a nano-cage that allows encapsulation of the non-native substrate proteins and provides a physical environment optimized to promote and accelerate protein folding. In Frankia alni (strain DSM 45986 / CECT 9034 / ACN14a), this protein is Chaperonin GroEL 1.